Reading from the N-terminus, the 206-residue chain is MMIDRETQVVDCRCGAGLGKGGGLAQRGTLSEAGRAEVVAIAMSPGQRHITKPVCEITYGMRKENIQVSVLVLYSGSGIPESGMRTGSFVLSPVEVAQIEMHKLAVIHLGNIKDHVVRKTREILSQANIPAIVVSQIPVDFEDFAEAGIKTRLVMPRDEDIRTKGIVMDMVSGVTRGDSCPRDKLNLIIKYVKTTLDQLEDHKGVA.

MCR is composed of three subunits: alpha, beta, and gamma. The function of proteins C and D is not known.

This Methanosarcina barkeri (strain Fusaro / DSM 804) protein is Methyl-coenzyme M reductase operon protein C (mcrC).